A 234-amino-acid chain; its full sequence is Sugar fermentation stimulation protein homolog (234 aa).

It belongs to the SfsA family.

The chain is Sugar fermentation stimulation protein homolog from Edwardsiella ictaluri (strain 93-146).